The following is a 105-amino-acid chain: Fluoride-specific ion channel FluC (105 aa).

The next 3 helical transmembrane spans lie at 14–34 (FPLPILTVNVLGSFLMGVFVV), 44–64 (LSPLVMTGLLGGFTTFSAFSL), and 79–99 (ALYVALSVGLSIAGLMAGLWL). 2 residues coordinate Na(+): Gly54 and Thr57.

This sequence belongs to the fluoride channel Fluc/FEX (TC 1.A.43) family.

The protein localises to the cell inner membrane. It catalyses the reaction fluoride(in) = fluoride(out). Its activity is regulated as follows. Na(+) is not transported, but it plays an essential structural role and its presence is essential for fluoride channel function. Fluoride-specific ion channel. Important for reducing fluoride concentration in the cell, thus reducing its toxicity. This chain is Fluoride-specific ion channel FluC, found in Jannaschia sp. (strain CCS1).